Consider the following 183-residue polypeptide: Mitochondrial import inner membrane translocase subunit tim17 (183 aa).

Helical transmembrane passes span 13–33 (AGGA…GLGF), 57–77 (GGNF…LSYI), and 107–127 (VQAA…QHMM). The segment covering 131–141 (MQAQQEEMTQQ) has biased composition (polar residues). The disordered stretch occupies residues 131-183 (MQAQQEEMTQQHLEERKRYEEERKQREGERKKLNENGKSKKNKQQQNGENDLD). Positions 142–168 (HLEERKRYEEERKQREGERKKLNENGK) are enriched in basic and acidic residues. The segment covering 174 to 183 (QQQNGENDLD) has biased composition (low complexity).

Belongs to the Tim17/Tim22/Tim23 family.

It is found in the mitochondrion inner membrane. Its function is as follows. May be involved in the translocation of transit peptide-containing proteins across the mitochondrial inner membrane. The sequence is that of Mitochondrial import inner membrane translocase subunit tim17 (timm17) from Dictyostelium discoideum (Social amoeba).